The sequence spans 647 residues: Meiotically up-regulated protein C8C9.04 (647 aa).

2 disordered regions span residues Met1–Pro241 and Arg387–His647. The segment covering Lys29 to Thr46 has biased composition (polar residues). Basic residues predominate over residues Asn49 to Gln67. A compositionally biased stretch (polar residues) spans Thr92–Ile103. Residues Pro134–Thr145 show a composition bias toward low complexity. A compositionally biased stretch (polar residues) spans Glu146–Pro155. A compositionally biased stretch (low complexity) spans Ala156 to Ala177. Phosphoserine is present on residues Ser162 and Ser165. Thr168 bears the Phosphothreonine mark. Residues Gln193–Ser215 are compositionally biased toward polar residues. A phosphoserine mark is found at Ser197 and Ser200. A compositionally biased stretch (basic and acidic residues) spans Ala232–Pro241. Composition is skewed to polar residues over residues Gln390 to Val406, Val413 to Glu432, and Pro488 to Ser508. Ser396 carries the phosphoserine modification. Residues Ser489 and Ser490 each carry the phosphoserine modification. The residue at position 491 (Thr491) is a Phosphothreonine. Residues Ser515, Ser519, and Ser523 each carry the phosphoserine modification. Low complexity predominate over residues Ala518–Ala530. Over residues Gly561 to Ser589 the composition is skewed to polar residues. The span at Ala596–Asn613 shows a compositional bias: low complexity. Residues Ser633–His647 are compositionally biased toward basic residues.

In terms of biological role, has a role in meiosis and sporulation. This chain is Meiotically up-regulated protein C8C9.04, found in Schizosaccharomyces pombe (strain 972 / ATCC 24843) (Fission yeast).